The primary structure comprises 364 residues: Dihydroorotate dehydrogenase (quinone) (364 aa).

FMN is bound by residues 61–65 and Thr85; that span reads AGYDK. Position 65 (Lys65) interacts with substrate. 110 to 114 serves as a coordination point for substrate; that stretch reads NRLGF. FMN contacts are provided by Asn139 and Asn170. Asn170 lines the substrate pocket. Ser173 functions as the Nucleophile in the catalytic mechanism. Asn175 lines the substrate pocket. Residues Lys215 and Ser243 each coordinate FMN. 244-245 contributes to the substrate binding site; it reads NT. FMN contacts are provided by residues Gly266, Gly295, and 316-317; that span reads YS.

Belongs to the dihydroorotate dehydrogenase family. Type 2 subfamily. In terms of assembly, monomer. FMN serves as cofactor.

The protein resides in the cell membrane. It carries out the reaction (S)-dihydroorotate + a quinone = orotate + a quinol. It participates in pyrimidine metabolism; UMP biosynthesis via de novo pathway; orotate from (S)-dihydroorotate (quinone route): step 1/1. Its function is as follows. Catalyzes the conversion of dihydroorotate to orotate with quinone as electron acceptor. The protein is Dihydroorotate dehydrogenase (quinone) of Brucella melitensis biotype 2 (strain ATCC 23457).